Here is a 179-residue protein sequence, read N- to C-terminus: Large ribosomal subunit protein uL5 (179 aa).

This sequence belongs to the universal ribosomal protein uL5 family. In terms of assembly, part of the 50S ribosomal subunit; part of the 5S rRNA/L5/L18/L25 subcomplex. Contacts the 5S rRNA and the P site tRNA. Forms a bridge to the 30S subunit in the 70S ribosome.

Functionally, this is one of the proteins that bind and probably mediate the attachment of the 5S RNA into the large ribosomal subunit, where it forms part of the central protuberance. In the 70S ribosome it contacts protein S13 of the 30S subunit (bridge B1b), connecting the 2 subunits; this bridge is implicated in subunit movement. Contacts the P site tRNA; the 5S rRNA and some of its associated proteins might help stabilize positioning of ribosome-bound tRNAs. This chain is Large ribosomal subunit protein uL5, found in Dechloromonas aromatica (strain RCB).